The chain runs to 81 residues: MAKIGVQSNLSDVQQELQSKGYEVVQIENEQDGQDCECCIVSGRNADVAGISVPGQMSIIHAEGLSAEEIGQRVDEIVTQH.

Belongs to the UPF0180 family.

In Shouchella clausii (strain KSM-K16) (Alkalihalobacillus clausii), this protein is UPF0180 protein ABC2430.